Reading from the N-terminus, the 229-residue chain is Flagellar calcium-binding protein TB-1.7G (229 aa).

The disordered stretch occupies residues 1–25; it reads GSKNASNPKDGAASKGGKDGKTTAD. A compositionally biased stretch (basic and acidic residues) spans 16-25; that stretch reads GGKDGKTTAD. 4 EF-hand domains span residues 44–79, 80–115, 126–161, and 163–198; these read ESKS…ILKL, DEFT…LVEF, YDIF…LKEW, and VDIT…KKLQ. Ca(2+) is bound by residues D57, N59, T61, K63, and E68. Positions 139, 141, 143, 150, 176, 178, 180, and 187 each coordinate Ca(2+). The tract at residues 202–229 is disordered; that stretch reads DPDDEENGANEGDGANAGDGVPAAEGSA. Positions 210-221 are enriched in low complexity; that stretch reads ANEGDGANAGDG.

The protein belongs to the calflagin family.

The protein resides in the cell projection. It localises to the cilium. It is found in the flagellum. Functionally, may contribute to the rapid motility of the trypanosomes, playing a role either in flagellar structure or in calcium metabolism. Could alternate between a GDP-bound inactive form to a calcium/GTP-bound active form. The protein is Flagellar calcium-binding protein TB-1.7G of Trypanosoma brucei brucei.